The sequence spans 150 residues: Urease accessory protein UreE (150 aa).

This sequence belongs to the UreE family.

Its subcellular location is the cytoplasm. Its function is as follows. Involved in urease metallocenter assembly. Binds nickel. Probably functions as a nickel donor during metallocenter assembly. In Streptococcus salivarius (strain 57.I), this protein is Urease accessory protein UreE.